The sequence spans 331 residues: Ferrochelatase (331 aa).

Residues histidine 187 and glutamate 286 each coordinate Fe cation.

Belongs to the ferrochelatase family.

It localises to the cytoplasm. It carries out the reaction heme b + 2 H(+) = protoporphyrin IX + Fe(2+). It participates in porphyrin-containing compound metabolism; protoheme biosynthesis; protoheme from protoporphyrin-IX: step 1/1. Functionally, catalyzes the ferrous insertion into protoporphyrin IX. This chain is Ferrochelatase, found in Legionella pneumophila subsp. pneumophila (strain Philadelphia 1 / ATCC 33152 / DSM 7513).